Here is a 404-residue protein sequence, read N- to C-terminus: Adenosylhomocysteinase (404 aa).

Substrate contacts are provided by Asp-114 and Glu-139. Position 140 to 142 (140 to 142) interacts with NAD(+); sequence TTT. Substrate-binding residues include Lys-169 and Asp-173. Residues Asn-174, 203-208, Glu-226, Asn-261, 282-284, and Asn-329 each bind NAD(+); these read GYGWCG and AGH.

It belongs to the adenosylhomocysteinase family. The cofactor is NAD(+).

The protein localises to the cytoplasm. It catalyses the reaction S-adenosyl-L-homocysteine + H2O = L-homocysteine + adenosine. It participates in amino-acid biosynthesis; L-homocysteine biosynthesis; L-homocysteine from S-adenosyl-L-homocysteine: step 1/1. In terms of biological role, may play a key role in the regulation of the intracellular concentration of adenosylhomocysteine. This chain is Adenosylhomocysteinase, found in Thermotoga maritima (strain ATCC 43589 / DSM 3109 / JCM 10099 / NBRC 100826 / MSB8).